Reading from the N-terminus, the 132-residue chain is Small ribosomal subunit protein uS11 (132 aa).

A compositionally biased stretch (basic residues) spans 1 to 16 (MAAGMKGKRSRRRKER). Residues 1–20 (MAAGMKGKRSRRRKERKNVE) form a disordered region.

Belongs to the universal ribosomal protein uS11 family. As to quaternary structure, part of the 30S ribosomal subunit. Interacts with proteins S7 and S18. Binds to IF-3.

Located on the platform of the 30S subunit, it bridges several disparate RNA helices of the 16S rRNA. Forms part of the Shine-Dalgarno cleft in the 70S ribosome. The sequence is that of Small ribosomal subunit protein uS11 from Clostridium botulinum (strain Loch Maree / Type A3).